The primary structure comprises 438 residues: MPKIVVVGAVAGGATCASQIRRLDKESDIIIFEKDRDMSFANCALPYVIGEVVEDRKYALAYTPEKFYDRKQITVKTYHEVIAINDERQTVSVLNRKTNEQFEESYDKLILSPGASANSLGFESDITFTLRNLEDTDAIEQFIKANQVDKVLVVGAGYVSLEVLENLYKRGLHPTLIHRSDKINKLMDADMNQPILDELDKREIPYRLNEEIVAINGNEITFKSGRVEHYDMIIEGVGTHPNSKFIESSNIKLDRKGFIPVNDKLETNVPNIYAIGDIATSHYRHVDLPASVPLAWGAHRAASIVAEQIAGNDTIEFKGFLGNNIVKFFDYTFASVGVKPNELKQFDYKMVEVTQGAHANYYPGNSPLHLRVYYDTSNRQILRAAAVGKEGVDKRIDVLSMAMMNQLTVDELTEFEVAYAPPYSHPKDLINMIGYKAK.

8–33 contacts FAD; the sequence is GAVAGGATCASQIRRLDKESDIIIFE. Residues Thr-15, Gln-19, Arg-22, Ser-39, and Asn-42 each contribute to the substrate site. Cys-43 acts as the Nucleophile in catalysis. Residue Cys-43 is the Redox-active of the active site. Residue Lys-71 participates in substrate binding. 151–166 lines the NADP(+) pocket; it reads VLVVGAGYVSLEVLEN. Position 267–277 (267–277) interacts with FAD; sequence TNVPNIYAIGD. Position 299 (His-299) interacts with substrate. Tyr-419 is an FAD binding site. Lys-427 contacts substrate.

It belongs to the class-III pyridine nucleotide-disulfide oxidoreductase family. Homodimer. It depends on FAD as a cofactor.

It catalyses the reaction NADP(+) + 2 CoA = CoA-disulfide + NADPH + H(+). Its function is as follows. Catalyzes specifically the NADPH-dependent reduction of coenzyme A disulfide. The polypeptide is Coenzyme A disulfide reductase (Staphylococcus aureus (strain bovine RF122 / ET3-1)).